Consider the following 630-residue polypeptide: Adenine DNA glycosylase (630 aa).

Positions 54–72 are enriched in basic and acidic residues; that stretch reads MRKCREKKEAEREAEREAE. The segment at 54 to 123 is disordered; that stretch reads MRKCREKKEA…ALGGDIEDLF (70 aa). Residues 73-123 are compositionally biased toward acidic residues; the sequence is REAEEEEKAEEAEAEADKEEAEEESEEEEEEEEEEAEAEEEALGGDIEDLF. Glu168 acts as the Proton donor/acceptor in catalysis. [4Fe-4S] cluster is bound by residues Cys341, Cys348, Cys351, and Cys357. Positions 383-536 constitute a Nudix hydrolase domain; it reads PRHDFCCVCV…RKVPPFRLQH (154 aa). Residues 427-451 carry the Nudix box motif; it reads VILNEEADSATRRNAINVYLKEAFR.

This sequence belongs to the Nth/MutY family. [4Fe-4S] cluster is required as a cofactor.

It is found in the nucleus. The catalysed reaction is Hydrolyzes free adenine bases from 7,8-dihydro-8-oxoguanine:adenine mismatched double-stranded DNA, leaving an apurinic site.. Its function is as follows. Involved in oxidative DNA damage repair. Initiates repair of A*oxoG to C*G by removing the inappropriately paired adenine base from the DNA backbone. Possesses both adenine and 2-OH-A DNA glycosylase activities. This chain is Adenine DNA glycosylase (MYH), found in Arabidopsis thaliana (Mouse-ear cress).